The following is a 777-amino-acid chain: MQCLFLEERIKKEGCVVLFAEAFRPSFANIQGFLTTIAEPVSRLSLMHEYRMTYFSLGAAASASISVSEVIQFLDDHVYFFRDKCFASYRESVCAFAEMYMSRCNLARVVIDESRTLLECKDIVTAKTLLKDRVVRSLCCQPKETVGEDACPHFLLKSRAAARVVAERCVLLGYPLQQQYEYEKDTSIRNVNIALKSQTRPRPYQIAAVDAAASDGALRSGCIVLPCGSGKTLVGIMLLCKVKKPTLILCAGGVSVEQWRNQILEFASVCAPANNEEGDPSNSTTGEKVRTAAVGAARISCLTGKQKDEITDETDIVLTTYSMLVTAHKAQARCQVEGFEMNADGRGRNPRRANPKERLFQPYGLLIMDEVHMMPADAYKDSLGFINAKGVVGLTATYVREDSKIRDLFHLVGPKLFDISWERLASSGYLAHVTCIEVLTPLARRFSLEYLERSSELTSPQHGTPLLVMLAAANPNKMLCVMEIVKRHVAESSKILVFCDHIMLLKEYSKLLGAPVVCGDTPHRERLMIFSDFQSTSKVNVVCLSRVGDVSVNLPSANVVVQVSSHGGSRRQEAQRLGRILRPKEKASNGKPTDAWFYTVISTDTVEMSYAAHRTAFLVDQGYTCSVTEFNPDGAPEAAVEGVDDTAPGDVVSIRQAKLRGTFKKQELKCSVASPTAQGSVNPRSLDYQEKLLCRVVASWELDYQNATSQQNEPGVANDTATGLIDKKMKRARDETAEDIKREWNSGAQTTQPRGDFCRLPLQRLVGANDDVVYHES.

The Helicase ATP-binding domain occupies 212-416; the sequence is AASDGALRSG…DLFHLVGPKL (205 aa). 225-232 lines the ATP pocket; sequence LPCGSGKT. Positions 369–372 match the DEVH box motif; it reads DEVH. In terms of domain architecture, Helicase C-terminal spans 484–631; sequence IVKRHVAESS…GYTCSVTEFN (148 aa).

This sequence belongs to the helicase family. RAD25/XPB subfamily.

It carries out the reaction Couples ATP hydrolysis with the unwinding of duplex DNA by translocating in the 3'-5' direction.. The catalysed reaction is ATP + H2O = ADP + phosphate + H(+). In terms of biological role, ATP-dependent 3'-5' DNA helicase/translocase; binds dsDNA rather than ssDNA, unzipping it in a translocase rather than classical helicase activity. Involved in nucleotide excision repair (NER) of damaged DNA. XPB-R is a paralog of XBP, but is not a component of the TFIIH basal transcription factor and is dispensable for RNA polymerase II transcription. The polypeptide is DNA repair helicase/translocase XPB-R (Trypanosoma brucei brucei (strain 927/4 GUTat10.1)).